A 590-amino-acid chain; its full sequence is DNA mismatch repair protein MutL (590 aa).

The span at Pro335–Ala351 shows a compositional bias: polar residues. Residues Pro335–His354 form a disordered region.

This sequence belongs to the DNA mismatch repair MutL/HexB family.

In terms of biological role, this protein is involved in the repair of mismatches in DNA. It is required for dam-dependent methyl-directed DNA mismatch repair. May act as a 'molecular matchmaker', a protein that promotes the formation of a stable complex between two or more DNA-binding proteins in an ATP-dependent manner without itself being part of a final effector complex. The protein is DNA mismatch repair protein MutL of Dichelobacter nodosus (strain VCS1703A).